Consider the following 308-residue polypeptide: MSYNHKNVLDTEQFSKSDLDFLIKKIKDMEHLVERHKAFGILTGKLLASLFFEASTRTRLSFEAAMERLGGRVISTVGFQFSSISKGETLYDTMKMVEAYADIAVIRHPVEGSSRIAAGAVKIPVVNAGDGAGQHPTQAILDLYTIISEKGTLDGLSVAFIGDLKYGRTIHSLINLLRHYKVRLYLISPIELALPDSYKKGLEGYPLTLEETTDIKAVWECDVAYVTRIQEERFPDHKEYERLKDLFKINKELILASKKETTILHPLPRVNELSTDVDDLPNAAYFRQARYGVVSRMTLLCLCLGQDF.

Carbamoyl phosphate contacts are provided by R57 and T58. K86 contacts L-aspartate. 3 residues coordinate carbamoyl phosphate: R107, H135, and Q138. Residues R168 and R228 each coordinate L-aspartate. L267 and P268 together coordinate carbamoyl phosphate.

This sequence belongs to the aspartate/ornithine carbamoyltransferase superfamily. ATCase family. In terms of assembly, heterododecamer (2C3:3R2) of six catalytic PyrB chains organized as two trimers (C3), and six regulatory PyrI chains organized as three dimers (R2).

It catalyses the reaction carbamoyl phosphate + L-aspartate = N-carbamoyl-L-aspartate + phosphate + H(+). The protein operates within pyrimidine metabolism; UMP biosynthesis via de novo pathway; (S)-dihydroorotate from bicarbonate: step 2/3. In terms of biological role, catalyzes the condensation of carbamoyl phosphate and aspartate to form carbamoyl aspartate and inorganic phosphate, the committed step in the de novo pyrimidine nucleotide biosynthesis pathway. The chain is Aspartate carbamoyltransferase catalytic subunit from Leptospira borgpetersenii serovar Hardjo-bovis (strain JB197).